A 277-amino-acid chain; its full sequence is Putative protein-disulfide oxidoreductase RC0029 (277 aa).

A signal peptide spans 1–22 (MRSIFIILIFLLFLSSCSEEKA). The interval 34-80 (EHETQNNETSKATNQEAVNSENTTESIVPANDNNQTDEVSTPASQKQ) is disordered. The segment covering 39-80 (NNETSKATNQEAVNSENTTESIVPANDNNQTDEVSTPASQKQ) has biased composition (polar residues). A Thioredoxin domain is found at 76–265 (ASQKQKNPAI…ISTAVDKALE (190 aa)). Cys-118 and Cys-121 form a disulfide bridge.

Belongs to the thioredoxin family. DsbA subfamily.

It is found in the periplasm. Functionally, may be required for disulfide bond formation in some proteins. This is Putative protein-disulfide oxidoreductase RC0029 from Rickettsia conorii (strain ATCC VR-613 / Malish 7).